A 96-amino-acid chain; its full sequence is Small ribosomal subunit protein bS6 (96 aa).

Belongs to the bacterial ribosomal protein bS6 family.

In terms of biological role, binds together with bS18 to 16S ribosomal RNA. In Mycolicibacterium paratuberculosis (strain ATCC BAA-968 / K-10) (Mycobacterium paratuberculosis), this protein is Small ribosomal subunit protein bS6.